We begin with the raw amino-acid sequence, 1193 residues long: DNA-directed RNA polymerase subunit beta (1193 aa).

Residues 1149–1162 (EEEIEMRDLEDEED) show a composition bias toward acidic residues. Positions 1149-1193 (EEEIEMRDLEDEEDAKQADGLALSGDEEPEETASADVERDVVTKE) are disordered. Residues 1184-1193 (DVERDVVTKE) are compositionally biased toward basic and acidic residues.

It belongs to the RNA polymerase beta chain family. RNAP is composed of a core of 2 alpha, a beta and a beta' subunit. The core is associated with a delta subunit, and at least one of epsilon or omega. When a sigma factor is associated with the core the holoenzyme is formed, which can initiate transcription.

The catalysed reaction is RNA(n) + a ribonucleoside 5'-triphosphate = RNA(n+1) + diphosphate. Its function is as follows. DNA-dependent RNA polymerase catalyzes the transcription of DNA into RNA using the four ribonucleoside triphosphates as substrates. In Bacillus subtilis (strain 168), this protein is DNA-directed RNA polymerase subunit beta.